We begin with the raw amino-acid sequence, 436 residues long: GTPase Der (436 aa).

EngA-type G domains lie at 4 to 167 (SVVA…PNES) and 176 to 351 (IYFS…ESHT). GTP contacts are provided by residues 10 to 17 (GRPNVGKS), 57 to 61 (DTGGI), 119 to 122 (NKMD), 182 to 189 (GRPNVGKS), 229 to 233 (DTAGM), and 294 to 297 (NKWD). Positions 352-436 (KRIPTNVLND…PIKLFARRRQ (85 aa)) constitute a KH-like domain.

It belongs to the TRAFAC class TrmE-Era-EngA-EngB-Septin-like GTPase superfamily. EngA (Der) GTPase family. As to quaternary structure, associates with the 50S ribosomal subunit.

Functionally, GTPase that plays an essential role in the late steps of ribosome biogenesis. The chain is GTPase Der from Oceanobacillus iheyensis (strain DSM 14371 / CIP 107618 / JCM 11309 / KCTC 3954 / HTE831).